The following is an 856-amino-acid chain: DNA mismatch repair protein MutS (856 aa).

Residue 618–625 coordinates ATP; sequence GPNMGGKS.

It belongs to the DNA mismatch repair MutS family.

This protein is involved in the repair of mismatches in DNA. It is possible that it carries out the mismatch recognition step. This protein has a weak ATPase activity. The sequence is that of DNA mismatch repair protein MutS from Shewanella putrefaciens (strain CN-32 / ATCC BAA-453).